The primary structure comprises 256 residues: Small ribosomal subunit protein uS2 (256 aa).

It belongs to the universal ribosomal protein uS2 family.

The chain is Small ribosomal subunit protein uS2 from Methylococcus capsulatus (strain ATCC 33009 / NCIMB 11132 / Bath).